The primary structure comprises 181 residues: NAD(P)H-quinone oxidoreductase subunit I, chloroplastic (181 aa).

4Fe-4S ferredoxin-type domains follow at residues 52–81 and 92–121; these read GRIHFEFDKCIACEVCVRVCPINLPVVDWE and KSYSIDFGVCIFCGNCVEYCPTNCLSMTEE. Residues Cys-61, Cys-64, Cys-67, Cys-71, Cys-101, Cys-104, Cys-107, and Cys-111 each contribute to the [4Fe-4S] cluster site.

Belongs to the complex I 23 kDa subunit family. As to quaternary structure, NDH is composed of at least 16 different subunits, 5 of which are encoded in the nucleus. The cofactor is [4Fe-4S] cluster.

The protein resides in the plastid. The protein localises to the chloroplast thylakoid membrane. It carries out the reaction a plastoquinone + NADH + (n+1) H(+)(in) = a plastoquinol + NAD(+) + n H(+)(out). The catalysed reaction is a plastoquinone + NADPH + (n+1) H(+)(in) = a plastoquinol + NADP(+) + n H(+)(out). Functionally, NDH shuttles electrons from NAD(P)H:plastoquinone, via FMN and iron-sulfur (Fe-S) centers, to quinones in the photosynthetic chain and possibly in a chloroplast respiratory chain. The immediate electron acceptor for the enzyme in this species is believed to be plastoquinone. Couples the redox reaction to proton translocation, and thus conserves the redox energy in a proton gradient. This Zygnema circumcarinatum (Green alga) protein is NAD(P)H-quinone oxidoreductase subunit I, chloroplastic.